A 119-amino-acid chain; its full sequence is MACSVVVALLALLSLSGLEAIQHAPKIQVYSRHPAENGKPNFLNCYVSGFHPSDIEVDLLKNGKKIEKVEHSDLSFSKDWSFYLLYYTEFTPNEKDEYACRVSHVTFSTPKTVKWDRNI.

A signal peptide spans 1–20 (MACSVVVALLALLSLSGLEA). Positions 25–114 (PKIQVYSRHP…VTFSTPKTVK (90 aa)) constitute an Ig-like C1-type domain. Cysteine 45 and cysteine 100 are joined by a disulfide.

Belongs to the beta-2-microglobulin family. Heterodimer of an alpha chain and a beta chain. Beta-2-microglobulin is the beta-chain of major histocompatibility complex class I molecules.

It is found in the secreted. In terms of biological role, component of the class I major histocompatibility complex (MHC). Involved in the presentation of peptide antigens to the immune system. The polypeptide is Beta-2-microglobulin (B2M) (Mico emiliae (Emilia's marmoset)).